Here is a 119-residue protein sequence, read N- to C-terminus: Beta-2-microglobulin (119 aa).

An N-terminal signal peptide occupies residues 1–20; sequence MARFVVVALLVLLSLSGLEA. One can recognise an Ig-like C1-type domain in the interval 25-114; that stretch reads PKIQVYSRHP…VTFSTPKTVK (90 aa). Cysteine 45 and cysteine 100 form a disulfide bridge.

The protein belongs to the beta-2-microglobulin family. Heterodimer of an alpha chain and a beta chain. Beta-2-microglobulin is the beta-chain of major histocompatibility complex class I molecules.

Its subcellular location is the secreted. Component of the class I major histocompatibility complex (MHC). Involved in the presentation of peptide antigens to the immune system. This is Beta-2-microglobulin (B2M) from Callimico goeldii (Goeldi's marmoset).